Here is a 223-residue protein sequence, read N- to C-terminus: Alpha-S2-casein (223 aa).

The first 15 residues, 1–15, serve as a signal peptide directing secretion; it reads MKFFIFTCLLAVALA. 11 positions are modified to phosphoserine: Ser-23, Ser-24, Ser-25, Ser-72, Ser-73, Ser-74, Ser-77, Ser-145, Ser-147, Ser-151, and Ser-159. The stretch at residues 77–141 is a repeat; that stretch reads SAEVAPEEVK…AGPFTPTVNR (65 aa). The stretch at residues 159 to 223 is a repeat; it reads STEVFTKKTK…TNAIPYVRYL (65 aa).

It belongs to the alpha-casein family. As to expression, mammary gland specific. Secreted in milk.

The protein localises to the secreted. In terms of biological role, important role in the capacity of milk to transport calcium phosphate. In Ovis aries (Sheep), this protein is Alpha-S2-casein (CSN1S2).